The following is a 499-amino-acid chain: Lysine--tRNA ligase (499 aa).

2 residues coordinate Mg(2+): E408 and E415.

This sequence belongs to the class-II aminoacyl-tRNA synthetase family. As to quaternary structure, homodimer. It depends on Mg(2+) as a cofactor.

It localises to the cytoplasm. It carries out the reaction tRNA(Lys) + L-lysine + ATP = L-lysyl-tRNA(Lys) + AMP + diphosphate. This is Lysine--tRNA ligase from Bacillus cytotoxicus (strain DSM 22905 / CIP 110041 / 391-98 / NVH 391-98).